An 859-amino-acid polypeptide reads, in one-letter code: Sulfate permease 1 (859 aa).

Residues N51 and N93 are each glycosylated (N-linked (GlcNAc...) asparagine). 8 consecutive transmembrane segments (helical) span residues 94-114, 116-136, 148-168, 173-193, 206-226, 234-254, 292-312, and 332-352; these read LTAK…KWFP, YNFT…CVLV, LSPE…SLFA, VCIG…AEVL, PIIA…LGIL, LISL…IIWG, FGLI…TFGI, and FYFY…TAIS. N-linked (GlcNAc...) asparagine glycosylation is found at N358 and N391. 4 helical membrane passes run 395-415, 428-448, 468-488, and 525-545; these read EIPA…KSFG, LIAI…PATG, VFTG…FFFI, and FIVT…YFAM. N-linked (GlcNAc...) asparagine glycans are attached at residues N630, N653, and N718. The region spanning 630-808 is the STAS domain; the sequence is NTTVRPPPPG…SIIAGHSSFH (179 aa).

Belongs to the SLC26A/SulP transporter (TC 2.A.53) family.

The protein resides in the membrane. In terms of biological role, high affinity uptake of sulfate into the cell. The chain is Sulfate permease 1 (SUL1) from Saccharomyces cerevisiae (strain ATCC 204508 / S288c) (Baker's yeast).